A 308-amino-acid polypeptide reads, in one-letter code: GTPase Era (308 aa).

The Era-type G domain maps to 7–181; it reads RCGWVALIGP…LRLIVGYMPE (175 aa). A G1 region spans residues 15 to 22; it reads GPPNAGKS. 15-22 contacts GTP; it reads GPPNAGKS. Residues 41–45 are G2; it reads QTTRN. The G3 stretch occupies residues 62 to 65; it reads DTPG. Residues 62-66 and 130-133 contribute to the GTP site; these read DTPGI and NKID. Residues 130–133 are G4; sequence NKID. Residues 160–162 form a G5 region; that stretch reads ASA. The KH type-2 domain maps to 212–290; the sequence is LRQELPYSTA…HLELWVKVRE (79 aa).

Belongs to the TRAFAC class TrmE-Era-EngA-EngB-Septin-like GTPase superfamily. Era GTPase family. In terms of assembly, monomer.

It is found in the cytoplasm. The protein localises to the cell inner membrane. In terms of biological role, an essential GTPase that binds both GDP and GTP, with rapid nucleotide exchange. Plays a role in 16S rRNA processing and 30S ribosomal subunit biogenesis and possibly also in cell cycle regulation and energy metabolism. The sequence is that of GTPase Era from Nitratidesulfovibrio vulgaris (strain DP4) (Desulfovibrio vulgaris).